The primary structure comprises 261 residues: Small ribosomal subunit protein uS2 (261 aa).

The protein belongs to the universal ribosomal protein uS2 family.

The chain is Small ribosomal subunit protein uS2 from Enterococcus faecalis (strain ATCC 700802 / V583).